Consider the following 391-residue polypeptide: 5-amino-6-(D-ribitylamino)uracil--L-tyrosine 4-hydroxyphenyl transferase (391 aa).

Residues 55-302 (VTYVINRNIN…GAVARIYLGN (248 aa)) enclose the Radical SAM core domain. 3 residues coordinate [4Fe-4S] cluster: C69, C73, and C76.

It belongs to the radical SAM superfamily. CofH family. In terms of assembly, consists of two subunits, CofG and CofH. It depends on [4Fe-4S] cluster as a cofactor.

The enzyme catalyses 5-amino-6-(D-ribitylamino)uracil + L-tyrosine + S-adenosyl-L-methionine = 5-amino-5-(4-hydroxybenzyl)-6-(D-ribitylimino)-5,6-dihydrouracil + 2-iminoacetate + 5'-deoxyadenosine + L-methionine + H(+). The protein operates within cofactor biosynthesis; coenzyme F0 biosynthesis. In terms of biological role, catalyzes the radical-mediated synthesis of 5-amino-5-(4-hydroxybenzyl)-6-(D-ribitylimino)-5,6-dihydrouracil from 5-amino-6-(D-ribitylamino)uracil and L-tyrosine. The sequence is that of 5-amino-6-(D-ribitylamino)uracil--L-tyrosine 4-hydroxyphenyl transferase from Nostoc sp. (strain PCC 7120 / SAG 25.82 / UTEX 2576).